The chain runs to 129 residues: Serum amyloid A-4 protein (129 aa).

Residues 1–18 (MKLLIGILFCTLIMGVTG) form the signal peptide. Residues 107–121 (AEEWGRSGQDPDHFR) are compositionally biased toward basic and acidic residues. Residues 107-129 (AEEWGRSGQDPDHFRPAGLPKKY) are disordered.

Belongs to the SAA family. In terms of assembly, apolipoprotein of the HDL complex.

The protein localises to the secreted. Its function is as follows. Major acute phase reactant. The sequence is that of Serum amyloid A-4 protein from Bos taurus (Bovine).